The following is a 347-amino-acid chain: Ubiquinone biosynthesis protein coq-4, mitochondrial (347 aa).

The transit peptide at methionine 1–phenylalanine 49 directs the protein to the mitochondrion. The Zn(2+) site is built by histidine 185, aspartate 186, histidine 189, and glutamate 201. The disordered stretch occupies residues isoleucine 284–valine 310.

Belongs to the COQ4 family. As to quaternary structure, component of a multi-subunit COQ enzyme complex, composed of at least coq-3, coq-4, coq-5, coq-6, coq-7 and coq-9. Requires Zn(2+) as cofactor.

The protein localises to the mitochondrion inner membrane. It catalyses the reaction a 4-hydroxy-3-methoxy-5-(all-trans-polyprenyl)benzoate + H(+) = a 2-methoxy-6-(all-trans-polyprenyl)phenol + CO2. It participates in cofactor biosynthesis; ubiquinone biosynthesis. Its function is as follows. Lyase that catalyzes the C1-decarboxylation of 4-hydroxy-3-methoxy-5-(all-trans-polyprenyl)benzoic acid into 2-methoxy-6-(all-trans-polyprenyl)phenol during ubiquinone biosynthesis. This Neurospora crassa (strain ATCC 24698 / 74-OR23-1A / CBS 708.71 / DSM 1257 / FGSC 987) protein is Ubiquinone biosynthesis protein coq-4, mitochondrial.